Here is a 110-residue protein sequence, read N- to C-terminus: Large ribosomal subunit protein uL22 (110 aa).

It belongs to the universal ribosomal protein uL22 family. Part of the 50S ribosomal subunit.

Its function is as follows. This protein binds specifically to 23S rRNA; its binding is stimulated by other ribosomal proteins, e.g. L4, L17, and L20. It is important during the early stages of 50S assembly. It makes multiple contacts with different domains of the 23S rRNA in the assembled 50S subunit and ribosome. The globular domain of the protein is located near the polypeptide exit tunnel on the outside of the subunit, while an extended beta-hairpin is found that lines the wall of the exit tunnel in the center of the 70S ribosome. The polypeptide is Large ribosomal subunit protein uL22 (Aliarcobacter butzleri (strain RM4018) (Arcobacter butzleri)).